The sequence spans 963 residues: Bifunctional glutamine synthetase adenylyltransferase/adenylyl-removing enzyme (963 aa).

Residues Met-1–Glu-453 form an adenylyl removase region. Residues Val-461 to Ala-963 form an adenylyl transferase region.

This sequence belongs to the GlnE family. Requires Mg(2+) as cofactor.

It catalyses the reaction [glutamine synthetase]-O(4)-(5'-adenylyl)-L-tyrosine + phosphate = [glutamine synthetase]-L-tyrosine + ADP. The enzyme catalyses [glutamine synthetase]-L-tyrosine + ATP = [glutamine synthetase]-O(4)-(5'-adenylyl)-L-tyrosine + diphosphate. In terms of biological role, involved in the regulation of glutamine synthetase GlnA, a key enzyme in the process to assimilate ammonia. When cellular nitrogen levels are high, the C-terminal adenylyl transferase (AT) inactivates GlnA by covalent transfer of an adenylyl group from ATP to specific tyrosine residue of GlnA, thus reducing its activity. Conversely, when nitrogen levels are low, the N-terminal adenylyl removase (AR) activates GlnA by removing the adenylyl group by phosphorolysis, increasing its activity. The regulatory region of GlnE binds the signal transduction protein PII (GlnB) which indicates the nitrogen status of the cell. The sequence is that of Bifunctional glutamine synthetase adenylyltransferase/adenylyl-removing enzyme from Mannheimia haemolytica (Pasteurella haemolytica).